Consider the following 449-residue polypeptide: Exodeoxyribonuclease 7 large subunit (449 aa).

It belongs to the XseA family. Heterooligomer composed of large and small subunits.

Its subcellular location is the cytoplasm. It carries out the reaction Exonucleolytic cleavage in either 5'- to 3'- or 3'- to 5'-direction to yield nucleoside 5'-phosphates.. Bidirectionally degrades single-stranded DNA into large acid-insoluble oligonucleotides, which are then degraded further into small acid-soluble oligonucleotides. This is Exodeoxyribonuclease 7 large subunit from Lacticaseibacillus paracasei (strain ATCC 334 / BCRC 17002 / CCUG 31169 / CIP 107868 / KCTC 3260 / NRRL B-441) (Lactobacillus paracasei).